Here is a 688-residue protein sequence, read N- to C-terminus: Beta-galactosidase BglY (688 aa).

Position 118 (Arg118) interacts with substrate. Cys122 is a binding site for Zn(2+). Asn156 provides a ligand contact to substrate. Catalysis depends on Glu157, which acts as the Proton donor. Residues Cys162, Cys164, and Cys167 each coordinate Zn(2+). The active-site Nucleophile is Glu313. Substrate-binding positions include Trp321 and 361-364 (EKFH).

Belongs to the glycosyl hydrolase 42 family.

The catalysed reaction is Hydrolysis of terminal non-reducing beta-D-galactose residues in beta-D-galactosides.. Its activity is regulated as follows. Ca(2+), Mg(2+) and EDTA have little effect on enzyme activity at 1-10 mM. Zn(2+) at 3, 5, 7 or 10 mM inhibits activity by 20%, 30%, 40% and 65%, respectively. Hydrolyzes o-nitrophenyl-beta-D-galactopyranoside (ONPG) and p-nitrophenyl-beta-D-fucopyranoside (PNPF), but not p-nitrophenyl-beta-D-glucopyranoside (PNPG), p-nitrophenyl-beta-D-xylopyranoside (PNPX) or p-nitrophenyl-beta-D-arabinopyranoside (PNPA). Also hydrolyzes lactose, including lactose in milk. The chain is Beta-galactosidase BglY (bglY) from Alicyclobacillus acidocaldarius subsp. acidocaldarius (strain ATCC 27009 / DSM 446 / BCRC 14685 / JCM 5260 / KCTC 1825 / NBRC 15652 / NCIMB 11725 / NRRL B-14509 / 104-IA) (Bacillus acidocaldarius).